The sequence spans 357 residues: 4-hydroxy-2-oxovalerate aldolase (357 aa).

The interval 1-21 (MSQEAARDAAAGRPVQIHDPT) is disordered. One can recognise a Pyruvate carboxyltransferase domain in the interval 15-265 (VQIHDPTLRD…RTGIDLYRLL (251 aa)). A substrate-binding site is contributed by 23–24 (RD). Aspartate 24 is a Mn(2+) binding site. Histidine 27 acts as the Proton acceptor in catalysis. Residues serine 177 and histidine 204 each coordinate substrate. Mn(2+) contacts are provided by histidine 204 and histidine 206.

It belongs to the 4-hydroxy-2-oxovalerate aldolase family.

It carries out the reaction (S)-4-hydroxy-2-oxopentanoate = acetaldehyde + pyruvate. In terms of biological role, involved in the biosynthesis of the peptidyl nucleoside antibiotic nikkomycin. The protein is 4-hydroxy-2-oxovalerate aldolase of Streptomyces tendae.